Reading from the N-terminus, the 235-residue chain is NAD(P)H-quinone oxidoreductase subunit K, chloroplastic (235 aa).

The [4Fe-4S] cluster site is built by cysteine 43, cysteine 44, cysteine 108, and cysteine 139.

It belongs to the complex I 20 kDa subunit family. In terms of assembly, NDH is composed of at least 16 different subunits, 5 of which are encoded in the nucleus. It depends on [4Fe-4S] cluster as a cofactor.

Its subcellular location is the plastid. It localises to the chloroplast thylakoid membrane. It catalyses the reaction a plastoquinone + NADH + (n+1) H(+)(in) = a plastoquinol + NAD(+) + n H(+)(out). The enzyme catalyses a plastoquinone + NADPH + (n+1) H(+)(in) = a plastoquinol + NADP(+) + n H(+)(out). In terms of biological role, NDH shuttles electrons from NAD(P)H:plastoquinone, via FMN and iron-sulfur (Fe-S) centers, to quinones in the photosynthetic chain and possibly in a chloroplast respiratory chain. The immediate electron acceptor for the enzyme in this species is believed to be plastoquinone. Couples the redox reaction to proton translocation, and thus conserves the redox energy in a proton gradient. The protein is NAD(P)H-quinone oxidoreductase subunit K, chloroplastic of Ipomoea purpurea (Common morning glory).